The chain runs to 551 residues: Endolytic murein transglycosylase (551 aa).

The Cytoplasmic portion of the chain corresponds to 1-187 (MSEKSREEEK…PKKEKKSHVK (187 aa)). The disordered stretch occupies residues 38–180 (VRTPANEPSA…EGAKPAKPKK (143 aa)). Composition is skewed to low complexity over residues 100 to 110 (PSSPAEESGSR) and 145 to 157 (QAGP…ATET). Positions 159 to 174 (DIIRDTSRRSRREGAK) are enriched in basic and acidic residues. Residues 188-208 (AFVISFLVFLALLSAGGYFGY) traverse the membrane as a helical segment. Topologically, residues 209–551 (QYVLDSLLPI…VAEHVNSKLN (343 aa)) are extracellular.

It belongs to the transglycosylase MltG family.

Its subcellular location is the cell membrane. It catalyses the reaction a peptidoglycan chain = a peptidoglycan chain with N-acetyl-1,6-anhydromuramyl-[peptide] at the reducing end + a peptidoglycan chain with N-acetylglucosamine at the non-reducing end.. In terms of biological role, functions as a peptidoglycan terminase that cleaves nascent peptidoglycan strands endolytically to terminate their elongation. Involved in peripheral peptidoglycan (PG) synthesis. The sequence is that of Endolytic murein transglycosylase from Streptococcus pneumoniae serotype 2 (strain D39 / NCTC 7466).